We begin with the raw amino-acid sequence, 502 residues long: Membrane-bound lytic murein transglycosylase F (502 aa).

The signal sequence occupies residues 1–33; it reads MSRFISTFRSSSAQLSIVLAVILATGCSQPTTL. The interval 34–264 is non-LT domain; that stretch reads QEIREEGVLH…QLAERFYGHL (231 aa). Residues 265–502 form an LT domain region; that stretch reads DRLNYVGART…PELRLIPPTL (238 aa). E311 is a catalytic residue. Residues 457-502 are disordered; that stretch reads PSASGLEDQLAWLGDNEAGPEAPAKESQPDLRADLPPELRLIPPTL. Positions 479–493 are enriched in basic and acidic residues; it reads PAKESQPDLRADLPP.

This sequence in the N-terminal section; belongs to the bacterial solute-binding protein 3 family. The protein in the C-terminal section; belongs to the transglycosylase Slt family.

Its subcellular location is the cell outer membrane. It catalyses the reaction Exolytic cleavage of the (1-&gt;4)-beta-glycosidic linkage between N-acetylmuramic acid (MurNAc) and N-acetylglucosamine (GlcNAc) residues in peptidoglycan, from either the reducing or the non-reducing ends of the peptidoglycan chains, with concomitant formation of a 1,6-anhydrobond in the MurNAc residue.. Murein-degrading enzyme that degrades murein glycan strands and insoluble, high-molecular weight murein sacculi, with the concomitant formation of a 1,6-anhydromuramoyl product. Lytic transglycosylases (LTs) play an integral role in the metabolism of the peptidoglycan (PG) sacculus. Their lytic action creates space within the PG sacculus to allow for its expansion as well as for the insertion of various structures such as secretion systems and flagella. The polypeptide is Membrane-bound lytic murein transglycosylase F (Marinobacter nauticus (strain ATCC 700491 / DSM 11845 / VT8) (Marinobacter aquaeolei)).